Reading from the N-terminus, the 354-residue chain is NADH-quinone oxidoreductase subunit H (354 aa).

The next 8 helical transmembrane spans lie at 25–45 (LVRI…LILW), 91–111 (WLYL…WAVI), 126–146 (LLYA…AGWA), 170–190 (MGFA…SEIV), 205–225 (FLSW…ISGI), 253–273 (MAFA…SALA), 290–310 (FIPG…VFIW), and 330–350 (VFLP…MSPL).

The protein belongs to the complex I subunit 1 family. NDH-1 is composed of 14 different subunits. Subunits NuoA, H, J, K, L, M, N constitute the membrane sector of the complex.

The protein localises to the cell inner membrane. It catalyses the reaction a quinone + NADH + 5 H(+)(in) = a quinol + NAD(+) + 4 H(+)(out). Functionally, NDH-1 shuttles electrons from NADH, via FMN and iron-sulfur (Fe-S) centers, to quinones in the respiratory chain. The immediate electron acceptor for the enzyme in this species is believed to be ubiquinone. Couples the redox reaction to proton translocation (for every two electrons transferred, four hydrogen ions are translocated across the cytoplasmic membrane), and thus conserves the redox energy in a proton gradient. This subunit may bind ubiquinone. This chain is NADH-quinone oxidoreductase subunit H, found in Burkholderia thailandensis (strain ATCC 700388 / DSM 13276 / CCUG 48851 / CIP 106301 / E264).